The following is a 178-amino-acid chain: Interleukin-10 (178 aa).

A signal peptide spans 1 to 18; sequence MHSSALLCCLVVLTGVRA. Intrachain disulfides connect Cys-30–Cys-126 and Cys-80–Cys-132. N-linked (GlcNAc...) asparagine glycosylation is present at Asn-134.

The protein belongs to the IL-10 family. In terms of assembly, homodimer. Interacts with IL10RA and IL10RB.

The protein resides in the secreted. In terms of biological role, major immune regulatory cytokine that acts on many cells of the immune system where it has profound anti-inflammatory functions, limiting excessive tissue disruption caused by inflammation. Mechanistically, IL10 binds to its heterotetrameric receptor comprising IL10RA and IL10RB leading to JAK1 and STAT2-mediated phosphorylation of STAT3. In turn, STAT3 translocates to the nucleus where it drives expression of anti-inflammatory mediators. Targets antigen-presenting cells (APCs) such as macrophages and monocytes and inhibits their release of pro-inflammatory cytokines including granulocyte-macrophage colony-stimulating factor /GM-CSF, granulocyte colony-stimulating factor/G-CSF, IL-1 alpha, IL-1 beta, IL-6, IL-8 and TNF-alpha. Also interferes with antigen presentation by reducing the expression of MHC-class II and co-stimulatory molecules, thereby inhibiting their ability to induce T cell activation. In addition, controls the inflammatory response of macrophages by reprogramming essential metabolic pathways including mTOR signaling. This is Interleukin-10 (IL10) from Papio hamadryas (Hamadryas baboon).